The sequence spans 550 residues: Invertase (550 aa).

An N-terminal signal peptide occupies residues 1–22 (MIQLSPLLLLPLFSVFNSIADA). Residues 39 to 42 (WMND), Gln60, and 103 to 104 (FS) contribute to the substrate site. Residue Asp42 is part of the active site. N-linked (GlcNAc...) asparagine glycosylation is found at Asn112, Asn113, Asn119, and Asn165. Residue 170-171 (RD) participates in substrate binding. A glycan (N-linked (GlcNAc...) asparagine) is linked at Asn211. Glu223 serves as a coordination point for substrate. Asn237 is a glycosylation site (N-linked (GlcNAc...) asparagine). Substrate is bound at residue Trp313. N-linked (GlcNAc...) asparagine glycosylation is found at Asn333, Asn364, Asn398, and Asn420.

Belongs to the glycosyl hydrolase 32 family.

The enzyme catalyses Hydrolysis of terminal non-reducing beta-D-fructofuranoside residues in beta-D-fructofuranosides.. This is Invertase (INV1) from Wickerhamomyces anomalus (Yeast).